Here is a 161-residue protein sequence, read N- to C-terminus: 3-isopropylmalate dehydratase small subunit (161 aa).

It belongs to the LeuD family. LeuD type 2 subfamily. In terms of assembly, heterodimer of LeuC and LeuD.

It carries out the reaction (2R,3S)-3-isopropylmalate = (2S)-2-isopropylmalate. It participates in amino-acid biosynthesis; L-leucine biosynthesis; L-leucine from 3-methyl-2-oxobutanoate: step 2/4. Its function is as follows. Catalyzes the isomerization between 2-isopropylmalate and 3-isopropylmalate, via the formation of 2-isopropylmaleate. This Pyrobaculum calidifontis (strain DSM 21063 / JCM 11548 / VA1) protein is 3-isopropylmalate dehydratase small subunit.